Here is a 62-residue protein sequence, read N- to C-terminus: Photosystem II reaction center protein Z (62 aa).

The next 2 membrane-spanning stretches (helical) occupy residues 8 to 28 (AVFA…VALA) and 41 to 61 (FSGV…NSFI).

Belongs to the PsbZ family. PSII is composed of 1 copy each of membrane proteins PsbA, PsbB, PsbC, PsbD, PsbE, PsbF, PsbH, PsbI, PsbJ, PsbK, PsbL, PsbM, PsbT, PsbY, PsbZ, Psb30/Ycf12, at least 3 peripheral proteins of the oxygen-evolving complex and a large number of cofactors. It forms dimeric complexes.

Its subcellular location is the plastid. The protein resides in the chloroplast thylakoid membrane. In terms of biological role, may control the interaction of photosystem II (PSII) cores with the light-harvesting antenna, regulates electron flow through the 2 photosystem reaction centers. PSII is a light-driven water plastoquinone oxidoreductase, using light energy to abstract electrons from H(2)O, generating a proton gradient subsequently used for ATP formation. The protein is Photosystem II reaction center protein Z of Pinus thunbergii (Japanese black pine).